The chain runs to 121 residues: MARIAGVDLPNKHVNVSLTYIYGISTSSANKICEATKVDPMKKMNDLDEAELAAIREVIDREYKVEGRLRTEVALNIKRLQDIGCYRGQRHRKGLPVRGQRTRTNARTRKGKKKTVAGKKK.

A disordered region spans residues 91-121 (HRKGLPVRGQRTRTNARTRKGKKKTVAGKKK).

The protein belongs to the universal ribosomal protein uS13 family. Part of the 30S ribosomal subunit. Forms a loose heterodimer with protein S19. Forms two bridges to the 50S subunit in the 70S ribosome.

Functionally, located at the top of the head of the 30S subunit, it contacts several helices of the 16S rRNA. In the 70S ribosome it contacts the 23S rRNA (bridge B1a) and protein L5 of the 50S subunit (bridge B1b), connecting the 2 subunits; these bridges are implicated in subunit movement. Contacts the tRNAs in the A and P-sites. This is Small ribosomal subunit protein uS13 from Treponema denticola (strain ATCC 35405 / DSM 14222 / CIP 103919 / JCM 8153 / KCTC 15104).